Reading from the N-terminus, the 201-residue chain is Cardiotrophin-1 (201 aa).

It belongs to the IL-6 superfamily. In terms of tissue distribution, highly expressed in heart, skeletal muscle, prostate and ovary. Lower levels in lung, kidney, pancreas, thymus, testis and small intestine. Little or no expression in brain, placenta, liver, spleen, colon or peripheral blood leukocytes.

It is found in the secreted. Functionally, induces cardiac myocyte hypertrophy in vitro. Binds to and activates the ILST/gp130 receptor. The chain is Cardiotrophin-1 (CTF1) from Homo sapiens (Human).